Consider the following 327-residue polypeptide: Olfactory receptor 226 (327 aa).

The Extracellular portion of the chain corresponds to 1–26 (MERRNHSGRVSEFVLLGFPAPAPLRV). Asparagine 5 carries N-linked (GlcNAc...) asparagine glycosylation. The chain crosses the membrane as a helical span at residues 27–50 (LLFFLSLLAYVLVLTENMLIIIAI). At 51–58 (RNHPTLHK) the chain is on the cytoplasmic side. Residues 59 to 80 (PMYFFLANMSFLEIWYVTVTIP) traverse the membrane as a helical segment. The Extracellular segment spans residues 81–104 (KMLAGFIGSKENHGQLISFEACMT). Cysteine 102 and cysteine 194 are disulfide-bonded. The chain crosses the membrane as a helical span at residues 105 to 125 (QLYFFLGLGCTECVLLAVMAY). At 126–144 (DRYVAICHPLHYPVIVSSR) the chain is on the cytoplasmic side. The helical transmembrane segment at 145 to 163 (LCVQMAAGSWAGGFGISMV) threads the bilayer. The Extracellular segment spans residues 164–201 (KVFLISRLSYCGPNTINHFFCDVSPLLNLSCTDMSTAE). The chain crosses the membrane as a helical span at residues 202 to 224 (LTDFVLAIFILLGPLSVTGASYM). The Cytoplasmic portion of the chain corresponds to 225-241 (AITGAVMRIPSAAGRHK). A helical membrane pass occupies residues 242-265 (AFSTCASHLTVVIIFYAASIFIYA). Residues 266–277 (RPKALSAFDTNK) are Extracellular-facing. Residues 278 to 297 (LVSVLYAVIVPLFNPIIYCL) traverse the membrane as a helical segment. The Cytoplasmic segment spans residues 298–327 (RNQDVKRALRRTLHLAQDQEANTNKGSKNG).

The protein belongs to the G-protein coupled receptor 1 family. Olfactory epithelium.

The protein resides in the cell membrane. Odorant receptor. The protein is Olfactory receptor 226 (Olr226) of Rattus norvegicus (Rat).